Reading from the N-terminus, the 29-residue chain is 28 kDa protein (29 aa).

The chain is 28 kDa protein from Tritrichomonas foetus (Trichomonas foetus).